A 248-amino-acid chain; its full sequence is Myelin protein P0 (248 aa).

Positions 1-29 are cleaved as a signal peptide; sequence MAPGAPSSSPSPILAALLFSSLVLSPAQA. An Ig-like V-type domain is found at 30-143; the sequence is IVVYTDKEVY…DIVGKTSQVT (114 aa). Residues 30–153 are Extracellular-facing; the sequence is IVVYTDKEVY…LYVFEKVPTR (124 aa). A disulfide bond links C50 and C127. N122 carries N-linked (GlcNAc...) (complex) asparagine glycosylation. The chain crosses the membrane as a helical span at residues 154–179; that stretch reads YGVVLGAVIGGVLGVVLLVLLLFYVV. Over 180–248 the chain is Cytoplasmic; sequence RYCWLRRQAA…GLGESRKDKK (69 aa). At S210 the chain carries Phosphoserine; by PKC. Residues 222–248 form a disordered region; sequence MLDHSRSTKAASEKKAKGLGESRKDKK. Positions 224 to 248 are enriched in basic and acidic residues; that stretch reads DHSRSTKAASEKKAKGLGESRKDKK. S226 and S228 each carry phosphoserine. 2 positions are modified to phosphoserine; by PKC: S233 and S243.

Belongs to the myelin P0 protein family. As to quaternary structure, homodimer and homotetramer. In terms of processing, N-glycosylated; contains sulfate-substituted glycan.

Its subcellular location is the cell membrane. Functionally, is an adhesion molecule necessary for normal myelination in the peripheral nervous system. It mediates adhesion between adjacent myelin wraps and ultimately drives myelin compaction. This Equus caballus (Horse) protein is Myelin protein P0 (MPZ).